The sequence spans 157 residues: Heavy metal-associated isoprenylated plant protein 16 (157 aa).

Residues 2–71 (KQKILIRIAM…KVAFAELVSV (70 aa)) form the HMA domain. The segment at 73 to 115 (KVEPPKDGDKKPEEEKKPEEKKPEEKKPEEKKPEPCCQPWQKP) is disordered. The span at 75 to 106 (EPPKDGDKKPEEEKKPEEKKPEEKKPEEKKPE) shows a compositional bias: basic and acidic residues. The residue at position 154 (cysteine 154) is a Cysteine methyl ester. Cysteine 154 carries the S-farnesyl cysteine lipid modification. Positions 155-157 (RIM) are cleaved as a propeptide — removed in mature form.

The protein belongs to the HIPP family.

Functionally, probable heavy-metal-binding protein. The protein is Heavy metal-associated isoprenylated plant protein 16 of Arabidopsis thaliana (Mouse-ear cress).